Reading from the N-terminus, the 182-residue chain is Probable inosine/xanthosine triphosphatase (182 aa).

E65 serves as a coordination point for Mg(2+). Residue 65-66 (EA) coordinates substrate.

The protein belongs to the YjjX NTPase family. As to quaternary structure, homodimer. Mg(2+) is required as a cofactor. It depends on Mn(2+) as a cofactor.

The catalysed reaction is XTP + H2O = XDP + phosphate + H(+). It catalyses the reaction ITP + H2O = IDP + phosphate + H(+). Functionally, phosphatase that hydrolyzes non-canonical purine nucleotides such as XTP and ITP to their respective diphosphate derivatives. Probably excludes non-canonical purines from DNA/RNA precursor pool, thus preventing their incorporation into DNA/RNA and avoiding chromosomal lesions. The polypeptide is Probable inosine/xanthosine triphosphatase (Pyrobaculum neutrophilum (strain DSM 2338 / JCM 9278 / NBRC 100436 / V24Sta) (Thermoproteus neutrophilus)).